A 355-amino-acid polypeptide reads, in one-letter code: Homeobox protein knotted-1-like LET6 (355 aa).

The tract at residues 75–96 (PFMDNNNNNNPQEDNNSSSSSI) is disordered. Over residues 79 to 96 (NNNNNNPQEDNNSSSSSI) the composition is skewed to low complexity. Residues 237 to 257 (ELKGQLLRKYSGYLGSLKQEF) enclose the ELK domain. The segment at residues 258 to 321 (MKKRKKGKLP…NQRKRHWKPS (64 aa)) is a DNA-binding region (homeobox; TALE-type).

Belongs to the TALE/KNOX homeobox family. In terms of tissue distribution, expressed in developing lateral organs and developing ovaries in flowers.

It is found in the nucleus. Functionally, may have a role to play in formative events in ovule and embryo morphogenesis. Probably binds to the DNA sequence 5'-TGAC-3'. In Solanum lycopersicum (Tomato), this protein is Homeobox protein knotted-1-like LET6 (LET6).